The sequence spans 413 residues: Multidrug resistance protein MdtM (413 aa).

The Cytoplasmic segment spans residues 1–14 (MQRIIQFFSQRATT). The helical transmembrane segment at 15-35 (LFFPMALILYDFAAYLTTDLI) threads the bilayer. Residues 36–51 (QPGIINVVRDFNADVS) lie on the Periplasmic side of the membrane. Residues 52–72 (LAPASVSLYLAGGMALQWLLG) form a helical membrane-spanning segment. Residues 73–81 (PLSDRIGRR) are Cytoplasmic-facing. A helical transmembrane segment spans residues 82–102 (PVLIAGALIFTLACAATLLTT). The Periplasmic segment spans residues 103–106 (SMTQ). Residues 107–127 (FLVARFVQGTSICFIATVGYV) form a helical membrane-spanning segment. Residues 128–140 (TVQEAFGQTKAIK) lie on the Cytoplasmic side of the membrane. The chain crosses the membrane as a helical span at residues 141-161 (LMAIITSIVLVAPVIGPLSGA). Residues 162-170 (ALMHFVHWK) lie on the Periplasmic side of the membrane. Residues 171 to 191 (VLFGIIAVMGLLALCGLLLAM) traverse the membrane as a helical segment. Residues 192-225 (PETVQRGAVPFSAVSVLRDFRNVFRNPIFLTGAA) are Cytoplasmic-facing. The helical transmembrane segment at 226–246 (TLSLSYIPMMSWVAVSPVILI) threads the bilayer. Residues 247-254 (DAGGMSTS) are Periplasmic-facing. Residues 255-275 (QFAWAQVPVFGAVIVANMIVV) traverse the membrane as a helical segment. Residues 276-289 (RLVKDPTRPRFIWR) lie on the Cytoplasmic side of the membrane. Helical transmembrane passes span 290–310 (AVPI…LLPH) and 311–331 (VWLW…MIFP). At 332-351 (TLFRFTLFSNNLPKGTVSAS) the chain is on the cytoplasmic side. A helical membrane pass occupies residues 352–372 (LNMVILTVMAVSVEVGRWLWF). The Periplasmic segment spans residues 373 to 376 (HGGR). Residues 377 to 397 (LPFHLLAAVAGVIVVFTLATL) traverse the membrane as a helical segment. Topologically, residues 398–413 (LQRVRQHEAAELAAEK) are cytoplasmic.

The protein belongs to the major facilitator superfamily.

Its subcellular location is the cell inner membrane. Proton-dependent efflux pump. Confers resistance to a broad spectrum of chemically unrelated substrates. The chain is Multidrug resistance protein MdtM (mdtM) from Salmonella typhimurium (strain LT2 / SGSC1412 / ATCC 700720).